Consider the following 507-residue polypeptide: Peroxisomal membrane protein PEX14 (507 aa).

Composition is skewed to polar residues over residues 1 to 10 and 32 to 48; these read MATHQQTQPP and EVQQ…SVFK. A disordered region spans residues 1–52; the sequence is MATHQQTQPPSDFPALADENSQIPEATKPANEVQQATIAQDPPTSVFKNSEP. At 1 to 152 the chain is on the peroxisomal side; it reads MATHQQTQPP…QAAFLSRFRW (152 aa). 2 involved in interaction with PEX5 regions span residues 58-65 and 78-97; these read IQNAIKFL and RRSF…EAFR. Residues 153–173 traverse the membrane as a helical segment; the sequence is YHAILAVGVLAASGAGTAVFI. Residues 174–507 are Cytoplasmic-facing; that stretch reads KRSLIPRFKS…EQQHISQEGN (334 aa). A compositionally biased stretch (polar residues) spans 288–302; that stretch reads VTTARKPYTNGSNVD. Disordered stretches follow at residues 288-329, 344-394, 409-435, and 448-507; these read VTTA…PKSY, NIRE…NPRS, ANQN…QPPP, and PKPQ…QEGN. The segment covering 308 to 322 has biased composition (low complexity); it reads ARSASPPAAPADSSA. Over residues 378-394 the composition is skewed to polar residues; it reads QDESSNGQWWQQKNPRS.

The protein belongs to the peroxin-14 family. In terms of assembly, interacts with PEX13; forming the PEX13-PEX14 docking complex. Interacts with PEX5 (via WxxxF/Y motifs). As to expression, expressed in flowers, siliques, leaves and roots.

Its subcellular location is the peroxisome membrane. Functionally, component of the PEX13-PEX14 docking complex, a translocon channel that specifically mediates the import of peroxisomal cargo proteins bound to PEX5 receptor. The PEX13-PEX14 docking complex forms a large import pore which can be opened to a diameter of about 9 nm. Mechanistically, PEX5 receptor along with cargo proteins associates with the PEX14 subunit of the PEX13-PEX14 docking complex in the cytosol, leading to the insertion of the receptor into the organelle membrane with the concomitant translocation of the cargo into the peroxisome matrix. In Arabidopsis thaliana (Mouse-ear cress), this protein is Peroxisomal membrane protein PEX14.